The primary structure comprises 345 residues: Phosphoribosylformylglycinamidine cyclo-ligase (345 aa).

Belongs to the AIR synthase family.

It is found in the cytoplasm. The enzyme catalyses 2-formamido-N(1)-(5-O-phospho-beta-D-ribosyl)acetamidine + ATP = 5-amino-1-(5-phospho-beta-D-ribosyl)imidazole + ADP + phosphate + H(+). It participates in purine metabolism; IMP biosynthesis via de novo pathway; 5-amino-1-(5-phospho-D-ribosyl)imidazole from N(2)-formyl-N(1)-(5-phospho-D-ribosyl)glycinamide: step 2/2. This chain is Phosphoribosylformylglycinamidine cyclo-ligase, found in Escherichia coli (strain SE11).